The chain runs to 388 residues: Oxytocin receptor (388 aa).

The disordered stretch occupies residues 1-32 (MEGTPAANWSVELDLGSGVPPGEEGNRTAGPP). Residues 1 to 38 (MEGTPAANWSVELDLGSGVPPGEEGNRTAGPPQRNEAL) lie on the Extracellular side of the membrane. N-linked (GlcNAc...) asparagine glycosylation is found at asparagine 8 and asparagine 26. The chain crosses the membrane as a helical span at residues 39-63 (ARVEVAVLCLILFLALSGNACVLLA). Residues 64 to 74 (LRTTRHKHSRL) lie on the Cytoplasmic side of the membrane. Residues 75–97 (FFFMKHLSIADLVVAVFQVLPQL) traverse the membrane as a helical segment. The Extracellular segment spans residues 98 to 113 (LWDITFRFYGPDLLCR). A disulfide bond links cysteine 112 and cysteine 187. Residues 114-135 (LVKYLQVVGMFASTYLLLLMSL) traverse the membrane as a helical segment. Over 136-154 (DRCLAICQPLRSLRRRTDR) the chain is Cytoplasmic. A helical membrane pass occupies residues 155–175 (LAVLGTWLGCLVASAPQVHIF). The Extracellular segment spans residues 176-202 (SLREVADGVFDCWAVFIQPWGPKAYVT). Residues 203 to 225 (WITLAVYIVPVIVLAACYGLISF) form a helical membrane-spanning segment. Topologically, residues 226-274 (KIWQNLRLKTAAAAAAAEGNDAAGGAGRAALARVSSVKLISKAKIRTVK) are cytoplasmic. The chain crosses the membrane as a helical span at residues 275–293 (MTFIIVLAFIVCWTPFFFV). At 294–308 (QMWSVWDVNAPKEAS) the chain is on the extracellular side. The chain crosses the membrane as a helical span at residues 309 to 331 (AFIIAMLLASLNSCCNPWIYMLF). Topologically, residues 332 to 388 (TGHLFHELVQRFFCCSARYLKGSRPGETSVSKKSNSSTFVLSRRSSSQRSCSQPSSA) are cytoplasmic. Positions 354-388 (SRPGETSVSKKSNSSTFVLSRRSSSQRSCSQPSSA) are disordered. Phosphoserine occurs at positions 365 and 367. Low complexity predominate over residues 365-388 (SNSSTFVLSRRSSSQRSCSQPSSA).

This sequence belongs to the G-protein coupled receptor 1 family. Vasopressin/oxytocin receptor subfamily.

Its subcellular location is the cell membrane. Receptor for oxytocin. The activity of this receptor is mediated by G proteins which activate a phosphatidylinositol-calcium second messenger system. The chain is Oxytocin receptor (Oxtr) from Rattus norvegicus (Rat).